The sequence spans 800 residues: Putative antiporter subunit mnhA2 (800 aa).

Helical transmembrane passes span 3–23, 29–49, 78–98, 109–129, 133–153, 167–187, 202–222, 249–269, 273–293, 300–320, 337–357, 387–407, 428–448, 472–492, 527–547, 596–616, 627–647, 651–671, 676–696, 712–732, and 768–788; these read LVYLLGGLIVIMLIVLMTLFI, FAGYIALLAPILASGYFLAQI, GLGLMFGLIISIIGVAVFFYA, LPRFFLYLLLFMFSMLGIVVS, ILMYVFWELTSVSSFLLISYW, FIITVLGGLALLTGFIMLYII, SISEHALFIPMMIMLLIGAFT, SATMVKAGIFLLFKFTPILGL, YIYIVTFVGLITMIFGSVTAL, GILAYSTISQLGMIMSMVGLG, LILFAGLFHLMNHAIFKCALF, LVMTLAALSMAGVPLLNGFLS, LTIIVVAIGVIASIFTFVYAV, PWLFSLPAIILMVMIPIIFFI, GVNLPLIFSVIVIIVGLILAL, IITVLIFSILIAYGIFQVGLP, GPLEVILGIMISVVGIALVFI, LTMVILNGIIGYSVALFFLLM, LALTQLVVETITTILFIVSFS, TIKIIVSFIMAGAVVTLIFIA, and LDTMFEGIVLIIAGLGIYTLL.

The protein belongs to the CPA3 antiporters (TC 2.A.63) subunit A family. In terms of assembly, may form a heterooligomeric complex that consists of seven subunits: mnhA2, mnhB2, mnhC2, mnhD2, mnhE2, mnhF2 and mnhG2.

Its subcellular location is the cell membrane. The protein is Putative antiporter subunit mnhA2 (mnhA2) of Staphylococcus haemolyticus (strain JCSC1435).